We begin with the raw amino-acid sequence, 498 residues long: ADP,ATP carrier protein 1 (498 aa).

Topologically, residues 1 to 33 are cytoplasmic; the sequence is MNNPKNDNYLSELSKVIWPIERYENKKFLPMAF. Residues 34 to 54 traverse the membrane as a helical segment; that stretch reads MMFCILLNYSTLRSIKDGFVV. An intrachain disulfide couples C37 to C85. Topologically, residues 55-67 are extracellular; that stretch reads TDIGAEAISFLKT. Residues 68–88 form a helical membrane-spanning segment; it reads YIVLPSAVIAMVIYVKLCDIL. Residues 89–92 lie on the Cytoplasmic side of the membrane; sequence KQEN. A helical transmembrane segment spans residues 93–113; sequence VFYVITSFFLGYFALFAFVLY. Residues 114 to 147 lie on the Extracellular side of the membrane; that stretch reads PYPDLVHPDPETIESWSVAYPNVKWFIRIVGKWS. A helical membrane pass occupies residues 148-168; it reads FASFYTMAELWGTMMLSLLFW. Over 169–184 the chain is Cytoplasmic; that stretch reads QFANQITKTDEAKRFY. A helical membrane pass occupies residues 185 to 205; it reads SMFGLLANLALPVTSVIIGYC. At 206–218 the chain is on the extracellular side; that stretch reads LHEKTQIVAEHLK. A helical membrane pass occupies residues 219–239; it reads FVPLFVIMITSSFLVILTYRW. At 240–279 the chain is on the cytoplasmic side; that stretch reads MNKNVLTDPRLYDPALVKEKKAKAKMSLIDSFKMIFTSKY. Residues 280 to 300 traverse the membrane as a helical segment; that stretch reads VGYIALLLIAYGVSVNLVEGV. Topologically, residues 301 to 320 are extracellular; that stretch reads WKSKVKELYPTKEAYTIYMG. The helical transmembrane segment at 321 to 341 threads the bilayer; that stretch reads KFQFYQGWVAIAFMLIGSNIL. The Cytoplasmic segment spans residues 342-348; it reads RKVSWLT. Residues 349-369 traverse the membrane as a helical segment; sequence AAMITPLMMLITGAAFFAFIF. At 370–379 the chain is on the extracellular side; sequence FDSVIAMHLT. The chain crosses the membrane as a helical span at residues 380-400; the sequence is GILASGPLALAVMIGMIQNVL. Residues 401-438 are Cytoplasmic-facing; that stretch reads SKGVKYSLFDATKNMAYIPLDKDLRVKGQAAVEVIGGR. Position 436 to 442 (436 to 442) interacts with ATP; the sequence is GGRFGKS. The chain crosses the membrane as a helical span at residues 439–459; that stretch reads FGKSGGAIIQSTFFILFPAFG. Residues 460–465 are Extracellular-facing; the sequence is FVEATP. A helical transmembrane segment spans residues 466 to 486; the sequence is YFASIFFVIVILWIYAVKGLN. Residues 487–498 are Cytoplasmic-facing; that stretch reads KEYKVLVNKTEK.

This sequence belongs to the ADP/ATP translocase tlc family.

The protein localises to the cell membrane. Its function is as follows. Provides the rickettsial cell with host ATP in exchange for rickettsial ADP. This is an obligate exchange system. This energy acquiring activity is an important component of rickettsial parasitism. This chain is ADP,ATP carrier protein 1 (tlcA), found in Rickettsia conorii (strain ATCC VR-613 / Malish 7).